We begin with the raw amino-acid sequence, 810 residues long: AMP deaminase (810 aa).

The segment covering 1–10 has biased composition (polar residues); the sequence is MDNQATQRLN. 2 disordered regions span residues 1-61 and 114-137; these read MDNQ…SHES and AAMNKGHDSADHASQNSGGKPRTL. Phosphoserine occurs at positions 19, 58, and 61. A compositionally biased stretch (polar residues) spans 125 to 137; sequence HASQNSGGKPRTL. Ser-138 carries the phosphoserine modification. Zn(2+)-binding residues include His-362 and His-364. Substrate-binding positions include His-364 and 433-438; that span reads KFNLKY. Residue His-630 participates in Zn(2+) binding. Glu-633 contributes to the substrate binding site. His-652 (proton acceptor) is an active-site residue. Residue Asp-707 coordinates Zn(2+). 708 to 711 is a binding site for substrate; sequence DPLQ.

This sequence belongs to the metallo-dependent hydrolases superfamily. Adenosine and AMP deaminases family. Homotetramer. The cofactor is Zn(2+).

The enzyme catalyses AMP + H2O + H(+) = IMP + NH4(+). It participates in purine metabolism; IMP biosynthesis via salvage pathway; IMP from AMP: step 1/1. Its function is as follows. AMP deaminase plays a critical role in energy metabolism. This chain is AMP deaminase (AMD1), found in Saccharomyces cerevisiae (strain ATCC 204508 / S288c) (Baker's yeast).